Reading from the N-terminus, the 515-residue chain is SWI/SNF-related matrix-associated actin-dependent regulator of chromatin subfamily D member 1 (515 aa).

A disordered region spans residues 1–128; that stretch reads MAARAGFQSV…RNHNAKKKKM (128 aa). The segment covering 14 to 23 has biased composition (gly residues); sequence GGAGASGGAG. Residues 43 to 167 form an interaction with ESR1, NR1H4, NR3C1, PGR and SMARCA4 region; that stretch reads APGQGLYRSP…DQTIMRKRLD (125 aa). Arg68 and Arg88 each carry asymmetric dimethylarginine. Residue Lys101 forms a Glycyl lysine isopeptide (Lys-Gly) (interchain with G-Cter in SUMO2) linkage. Residues 103-117 are compositionally biased toward low complexity; it reads PAPQQIKQVQQQAVQ. The interval 168–474 is interaction with SMARCC1 and SMARCC2; it reads IQEALKRPIK…VMTDVVGNSE (307 aa). The interval 180–515 is necessary for GR/NR3C1-mediated remodeling and transcription from chromatin; required for GR/NR3C1 interaction with the BRG1/SMARCA4 complex in vivo; the sequence is RKLRIFISNT…LEQALGIRNT (336 aa). The residue at position 203 (Thr203) is a Phosphothreonine. Lys223 is subject to N6-acetyllysine. The SWIB/MDM2 domain occupies 290–367; that stretch reads YQPPQFKLDP…PQRLHALLMP (78 aa). Residues 412–440 adopt a coiled-coil conformation; sequence ASQQEIATLDNKIHETIETINQLKTQREF.

Belongs to the SMARCD family. In terms of assembly, component of the multiprotein chromatin-remodeling complexes SWI/SNF: SWI/SNF-A (BAF), SWI/SNF-B (PBAF) and related complexes. The canonical complex contains a catalytic subunit (either SMARCA4/BRG1/BAF190A or SMARCA2/BRM/BAF190B), and at least SMARCE1, ACTL6A/BAF53, SMARCC1/BAF155, SMARCC2/BAF170, and SMARCB1/SNF5/BAF47. Other subunits specific to each of the complexes may also be present permitting several possible combinations developmentally and tissue specific. Component of the BAF complex, which includes at least actin (ACTB), ARID1A/BAF250A, ARID1B/BAF250B, SMARCA2/BRM, SMARCA4/BRG1/BAF190A, ACTL6A/BAF53, ACTL6B/BAF53B, SMARCE1/BAF57, SMARCC1/BAF155, SMARCC2/BAF170, SMARCB1/SNF5/INI1, and one or more SMARCD1/BAF60A, SMARCD2/BAF60B, or SMARCD3/BAF60C. In muscle cells, the BAF complex also contains DPF3. Component of neural progenitors-specific chromatin remodeling complex (npBAF complex) composed of at least, ARID1A/BAF250A or ARID1B/BAF250B, SMARCD1/BAF60A, SMARCD3/BAF60C, SMARCA2/BRM/BAF190B, SMARCA4/BRG1/BAF190A, SMARCB1/BAF47, SMARCC1/BAF155, SMARCE1/BAF57, SMARCC2/BAF170, PHF10/BAF45A, ACTL6A/BAF53A and actin. Component of neuron-specific chromatin remodeling complex (nBAF complex) composed of at least, ARID1A/BAF250A or ARID1B/BAF250B, SMARCD1/BAF60A, SMARCD3/BAF60C, SMARCA2/BRM/BAF190B, SMARCA4/BRG1/BAF190A, SMARCB1/BAF47, SMARCC1/BAF155, SMARCE1/BAF57, SMARCC2/BAF170, DPF1/BAF45B, DPF3/BAF45C, ACTL6B/BAF53B and actin. Component of the SWI/SNF-B (PBAF) chromatin remodeling complex, at least composed of SMARCA4/BRG1, SMARCB1/BAF47/SNF5, ACTL6A/BAF53A or ACTL6B/BAF53B, SMARCE1/BAF57, SMARCD1/BAF60A, SMARCD2/BAF60B, perhaps SMARCD3/BAF60C, SMARCC1/BAF155, SMARCC2/BAF170, PBRM1/BAF180, ARID2/BAF200 and actin (ACTB). Component of SWI/SNF (GBAF) subcomplex, which includes at least BICRA or BICRAL (mutually exclusive), BRD9, SS18, SMARCA2/BRM, SMARCA4/BRG1/BAF190A, ACTL6A/BAF53, SMARCC1/BAF155, and SMARCD1/BAF60A. Specifically interacts with the VDR heterodimer complex. Interacts with ESR1, NR3C1, NR1H4, PGR, SMARCA4, SMARCC1 and SMARCC2. Interacts with DPF2. Interacts with FOS, FOSB, FOSL1 and FOSL2.

Its subcellular location is the nucleus. Functionally, involved in transcriptional activation and repression of select genes by chromatin remodeling (alteration of DNA-nucleosome topology). Component of SWI/SNF chromatin remodeling complexes that carry out key enzymatic activities, changing chromatin structure by altering DNA-histone contacts within a nucleosome in an ATP-dependent manner. Belongs to the neural progenitors-specific chromatin remodeling complex (npBAF complex) and the neuron-specific chromatin remodeling complex (nBAF complex). During neural development a switch from a stem/progenitor to a postmitotic chromatin remodeling mechanism occurs as neurons exit the cell cycle and become committed to their adult state. The transition from proliferating neural stem/progenitor cells to postmitotic neurons requires a switch in subunit composition of the npBAF and nBAF complexes. As neural progenitors exit mitosis and differentiate into neurons, npBAF complexes which contain ACTL6A/BAF53A and PHF10/BAF45A, are exchanged for homologous alternative ACTL6B/BAF53B and DPF1/BAF45B or DPF3/BAF45C subunits in neuron-specific complexes (nBAF). The npBAF complex is essential for the self-renewal/proliferative capacity of the multipotent neural stem cells. The nBAF complex along with CREST plays a role regulating the activity of genes essential for dendrite growth. Has a strong influence on vitamin D-mediated transcriptional activity from an enhancer vitamin D receptor element (VDRE). May be a link between mammalian SWI-SNF-like chromatin remodeling complexes and the vitamin D receptor (VDR) heterodimer. Mediates critical interactions between nuclear receptors and the BRG1/SMARCA4 chromatin-remodeling complex for transactivation. Interacts with AKIRIN2. This Bos taurus (Bovine) protein is SWI/SNF-related matrix-associated actin-dependent regulator of chromatin subfamily D member 1 (SMARCD1).